The chain runs to 152 residues: UPF0225 protein YchJ (152 aa).

It belongs to the UPF0225 family.

This chain is UPF0225 protein YchJ, found in Escherichia coli O7:K1 (strain IAI39 / ExPEC).